A 113-amino-acid polypeptide reads, in one-letter code: Cytochrome c55X (113 aa).

A signal peptide spans 1-26; it reads MTVARHAVSRLGLALASFLLFPLALA. Residues C45, C48, and H49 each contribute to the heme c site.

Binds 1 heme c group covalently per subunit.

Its subcellular location is the periplasm. Functionally, monoheme c-type cytochrome. The sequence is that of Cytochrome c55X (nirC) from Stutzerimonas stutzeri (Pseudomonas stutzeri).